A 328-amino-acid polypeptide reads, in one-letter code: Phosphate acyltransferase (328 aa).

This sequence belongs to the PlsX family. As to quaternary structure, homodimer. Probably interacts with PlsY.

Its subcellular location is the cytoplasm. The catalysed reaction is a fatty acyl-[ACP] + phosphate = an acyl phosphate + holo-[ACP]. Its pathway is lipid metabolism; phospholipid metabolism. In terms of biological role, catalyzes the reversible formation of acyl-phosphate (acyl-PO(4)) from acyl-[acyl-carrier-protein] (acyl-ACP). This enzyme utilizes acyl-ACP as fatty acyl donor, but not acyl-CoA. The protein is Phosphate acyltransferase of Campylobacter jejuni (strain RM1221).